We begin with the raw amino-acid sequence, 295 residues long: Alpha-soluble NSF attachment protein (295 aa).

Met1 carries the N-acetylmethionine modification. Residues Ser26, Ser29, and Ser195 each carry the phosphoserine modification.

The protein belongs to the SNAP family. As to quaternary structure, interacts with PRKCABP, and disrupts the interaction between GRIA2 and PRKCABP, leading to the internalization of GRIA2. Found in a complex with VAMP8. Component of a SNARE-like complex that contains at least ZW10, USE1L, RINT1, STX18 and NAPA/SNAP-alpha. Interacts with VTI1A. Interacts with STX12. Interacts with GNA12 (via N-terminus); the interaction promotes CDH5 localization to plasma membrane.

It localises to the cell membrane. Functionally, required for vesicular transport between the endoplasmic reticulum and the Golgi apparatus. Together with GNA12 promotes CDH5 localization to plasma membrane. In Homo sapiens (Human), this protein is Alpha-soluble NSF attachment protein (NAPA).